A 272-amino-acid polypeptide reads, in one-letter code: Cyanophycinase (272 aa).

Catalysis depends on charge relay system residues S132, E150, and H174.

The protein belongs to the peptidase S51 family.

The catalysed reaction is [L-4-(L-arginin-2-N-yl)aspartate](n) + H2O = [L-4-(L-arginin-2-N-yl)aspartate](n-1) + L-4-(L-arginin-2-N-yl)aspartate. Exopeptidase that catalyzes the hydrolytic cleavage of multi-L-arginyl-poly-L-aspartic acid (cyanophycin; a water-insoluble reserve polymer) into aspartate-arginine dipeptides. The protein is Cyanophycinase (cphB) of Geminocystis herdmanii (strain PCC 6308) (Synechocystis sp. (strain PCC 6308)).